Here is a 381-residue protein sequence, read N- to C-terminus: Sulfofructose kinase (381 aa).

Residues Gly-10, 72 to 73 (RY), and 100 to 103 (GNGT) each bind ATP. Asn-101 lines the Mg(2+) pocket. Asp-131 (proton acceptor) is an active-site residue.

This sequence belongs to the phosphofructokinase type A (PFKA) family. It depends on Mg(2+) as a cofactor.

The enzyme catalyses 6-deoxy-6-sulfo-D-fructose + ATP = 6-deoxy-6-sulfo-D-fructose 1-phosphate + ADP + H(+). Functionally, part of the sulfo-EMP2 pathway, a D-sulfoquinovose degradation pathway that produces sulfolactate (SL). Phosphorylates 6-deoxy-6-sulfo-D-fructose (SF) to 6-deoxy-6-sulfo-D-fructose 1-phosphate (SFP). This Alkalicoccus urumqiensis (Bacillus urumqiensis) protein is Sulfofructose kinase.